A 687-amino-acid chain; its full sequence is Probable intron-encoded endonuclease aI3 (687 aa).

The segment at 1-374 (MKQMSYVTRW…NASMDVAFHD (374 aa)) is COX1 exons 1 to 3 encoded. Transmembrane regions (helical) follow at residues 19-39 (IGMT…GMSV), 69-89 (LLMM…NFFL), 103-123 (LNNI…CSVL), 152-172 (AMFA…NFMV), 188-208 (PLFA…LPVL), 240-260 (LFWF…FGVM), 273-293 (FGEM…FLVW), 315-335 (MVIA…IYGG), 341-361 (VPML…LTGV), and 376-396 (IFIY…NNYT). Residues 375–687 (RIFIYYVSFF…KKESLMKFLK (313 aa)) form a COX1 intron 3 encoded region.

In the C-terminal section; belongs to the LAGLIDADG endonuclease family. It in the N-terminal section; belongs to the heme-copper respiratory oxidase family. In terms of processing, the mature protein may arise from proteolytic cleavage of an in-frame translation of COX1 exons 1 to 3 plus intron 3, containing the aI3 open reading frame.

The protein resides in the mitochondrion. It localises to the membrane. Mitochondrial DNA endonuclease involved in intron homing. This chain is Probable intron-encoded endonuclease aI3 (aI3), found in Debaryomyces hansenii (strain ATCC 36239 / CBS 767 / BCRC 21394 / JCM 1990 / NBRC 0083 / IGC 2968) (Yeast).